Reading from the N-terminus, the 240-residue chain is Transmembrane emp24 domain-containing protein 6 (240 aa).

A signal peptide spans Met1–Ser21. Over Gln22–Tyr200 the chain is Lumenal. The GOLD domain maps to Thr53–Val138. N-linked (GlcNAc...) asparagine glycans are attached at residues Asn107 and Asn156. The helical transmembrane segment at Val201–Leu223 threads the bilayer. At Lys224–Cys240 the chain is on the cytoplasmic side.

This sequence belongs to the EMP24/GP25L family.

The protein localises to the endoplasmic reticulum membrane. The protein is Transmembrane emp24 domain-containing protein 6 (TMED6) of Bos taurus (Bovine).